A 221-amino-acid chain; its full sequence is Small ribosomal subunit protein uS3 (221 aa).

In terms of domain architecture, KH type-2 spans 39–107; the sequence is IRNYIKEKLY…TVILNIIEVK (69 aa).

This sequence belongs to the universal ribosomal protein uS3 family. As to quaternary structure, part of the 30S ribosomal subunit. Forms a tight complex with proteins S10 and S14.

Its function is as follows. Binds the lower part of the 30S subunit head. Binds mRNA in the 70S ribosome, positioning it for translation. The polypeptide is Small ribosomal subunit protein uS3 (Caldanaerobacter subterraneus subsp. tengcongensis (strain DSM 15242 / JCM 11007 / NBRC 100824 / MB4) (Thermoanaerobacter tengcongensis)).